We begin with the raw amino-acid sequence, 199 residues long: Holliday junction branch migration complex subunit RuvA (199 aa).

Residues 1-63 are domain I; sequence MIDYIKGNLV…EDSQRLFGFT (63 aa). Residues 64-142 are domain II; the sequence is TRTERLLFEK…DMAPMLEPAA (79 aa). The segment at 143-153 is flexible linker; it reads GADKQQKNPQL. The interval 153–199 is domain III; the sequence is LEDALEALRALGYVEKELKKVEKQLKAETLETDEYIRRALALMLKRP.

This sequence belongs to the RuvA family. Homotetramer. Forms an RuvA(8)-RuvB(12)-Holliday junction (HJ) complex. HJ DNA is sandwiched between 2 RuvA tetramers; dsDNA enters through RuvA and exits via RuvB. An RuvB hexamer assembles on each DNA strand where it exits the tetramer. Each RuvB hexamer is contacted by two RuvA subunits (via domain III) on 2 adjacent RuvB subunits; this complex drives branch migration. In the full resolvosome a probable DNA-RuvA(4)-RuvB(12)-RuvC(2) complex forms which resolves the HJ.

The protein localises to the cytoplasm. Functionally, the RuvA-RuvB-RuvC complex processes Holliday junction (HJ) DNA during genetic recombination and DNA repair, while the RuvA-RuvB complex plays an important role in the rescue of blocked DNA replication forks via replication fork reversal (RFR). RuvA specifically binds to HJ cruciform DNA, conferring on it an open structure. The RuvB hexamer acts as an ATP-dependent pump, pulling dsDNA into and through the RuvAB complex. HJ branch migration allows RuvC to scan DNA until it finds its consensus sequence, where it cleaves and resolves the cruciform DNA. The polypeptide is Holliday junction branch migration complex subunit RuvA (Shouchella clausii (strain KSM-K16) (Alkalihalobacillus clausii)).